The following is a 321-amino-acid chain: L-carnitine dehydrogenase (321 aa).

7–12 (GTGVIG) contacts NAD(+).

Belongs to the 3-hydroxyacyl-CoA dehydrogenase family. L-carnitine dehydrogenase subfamily. In terms of assembly, homodimer.

The protein localises to the cytoplasm. It carries out the reaction carnitine + NAD(+) = 3-dehydrocarnitine + NADH + H(+). It functions in the pathway amine and polyamine metabolism; carnitine metabolism. Its function is as follows. Catalyzes the NAD(+)-dependent oxidation of L-carnitine to 3-dehydrocarnitine. This Staphylococcus epidermidis (strain ATCC 12228 / FDA PCI 1200) protein is L-carnitine dehydrogenase.